The chain runs to 184 residues: Photosystem I assembly protein Ycf4 (184 aa).

2 helical membrane passes run 22–42 and 57–77; these read FFWA…GTSS and IPFF…LFIS.

Belongs to the Ycf4 family.

It localises to the plastid. The protein resides in the chloroplast thylakoid membrane. Seems to be required for the assembly of the photosystem I complex. The chain is Photosystem I assembly protein Ycf4 from Ceratophyllum demersum (Rigid hornwort).